The chain runs to 208 residues: V-type ATP synthase subunit D (208 aa).

This sequence belongs to the V-ATPase D subunit family.

Functionally, produces ATP from ADP in the presence of a proton gradient across the membrane. This is V-type ATP synthase subunit D from Chlamydia felis (strain Fe/C-56) (Chlamydophila felis).